The primary structure comprises 566 residues: Serine/threonine-protein kinase ppk14 (566 aa).

Residues 1-31 show a composition bias toward basic and acidic residues; the sequence is MNELHDGESSEEGRINVEDHLEEAKKDDTGH. Disordered regions lie at residues 1-39 and 60-152; these read MNEL…GTAK and SRKK…EKLK. Residues 74-85 are compositionally biased toward polar residues; it reads AANQSPSGAPES. A compositionally biased stretch (basic residues) spans 119–129; the sequence is SFFKSGRKKKD. Over residues 134–145 the composition is skewed to polar residues; the sequence is RNVSRSNGADTS. The Protein kinase domain occupies 195–485; sequence FEKVFLLGKG…AADVKLHPFF (291 aa). ATP-binding positions include 201-209 and K224; that span reads LGKGDVGRV. Residue D320 is the Proton acceptor of the active site. T379 is modified (phosphothreonine). S381 carries the post-translational modification Phosphoserine. T385 carries the post-translational modification Phosphothreonine.

The protein belongs to the protein kinase superfamily. Ser/Thr protein kinase family. KIN82 subfamily.

It carries out the reaction L-seryl-[protein] + ATP = O-phospho-L-seryl-[protein] + ADP + H(+). The enzyme catalyses L-threonyl-[protein] + ATP = O-phospho-L-threonyl-[protein] + ADP + H(+). In Schizosaccharomyces pombe (strain 972 / ATCC 24843) (Fission yeast), this protein is Serine/threonine-protein kinase ppk14 (ppk14).